The sequence spans 102 residues: Small ribosomal subunit protein uS10 (102 aa).

This sequence belongs to the universal ribosomal protein uS10 family. As to quaternary structure, part of the 30S ribosomal subunit.

Involved in the binding of tRNA to the ribosomes. This Methylocella silvestris (strain DSM 15510 / CIP 108128 / LMG 27833 / NCIMB 13906 / BL2) protein is Small ribosomal subunit protein uS10.